A 98-amino-acid polypeptide reads, in one-letter code: Small ribosomal subunit protein bS20 (98 aa).

Residues 1–15 show a composition bias toward basic residues; it reads MAPKKTTKKGGPKKR. Residues 1–21 are disordered; that stretch reads MAPKKTTKKGGPKKRPSAEKR.

It belongs to the bacterial ribosomal protein bS20 family.

In terms of biological role, binds directly to 16S ribosomal RNA. The protein is Small ribosomal subunit protein bS20 of Chlamydia abortus (strain DSM 27085 / S26/3) (Chlamydophila abortus).